The following is a 228-amino-acid chain: Transmembrane protein 186 (228 aa).

At 1-93 (MDMMMMSTRL…RGLRALSRLK (93 aa)) the chain is on the mitochondrial matrix side. A helical membrane pass occupies residues 94 to 112 (LLQTGITVVLLPTVYYLHL). Residues 113–118 (QGQASV) lie on the Mitochondrial intermembrane side of the membrane. Residues 119 to 141 (LVLNRSIGIALFAGVMLYSISHF) traverse the membrane as a helical segment. Residues 142–228 (VRRVVGMMYL…AFGKVFGSLS (87 aa)) are Mitochondrial matrix-facing.

The protein belongs to the TMEM186 family.

It localises to the mitochondrion inner membrane. Its function is as follows. May be required for efficient assembly of the mitochondrial complex I. The polypeptide is Transmembrane protein 186 (Danio rerio (Zebrafish)).